Consider the following 664-residue polypeptide: Bifunctional 3-dehydroquinate synthase/phosphatase (664 aa).

The 3-dehydroquinate synthase stretch occupies residues 1-352; that stretch reads MKKIFDDIYV…KIIDKYKNNF (352 aa). NAD(+) contacts are provided by residues 61–66, 95–99, 119–120, lysine 132, lysine 141, and 159–162; these read DGEEYK, GVICD, TS, and FLKT. Zn(2+) contacts are provided by glutamate 174, histidine 238, and histidine 255. The GPPA/PPX stretch occupies residues 353–664; that stretch reads LRASIDIGTN…GAILEGVENK (312 aa).

It in the N-terminal section; belongs to the sugar phosphate cyclases superfamily. Dehydroquinate synthase family. The protein in the C-terminal section; belongs to the GppA/Ppx family. In terms of assembly, monomer. It depends on NAD(+) as a cofactor. The cofactor is Co(2+). Requires Zn(2+) as cofactor.

It is found in the cytoplasm. The catalysed reaction is 7-phospho-2-dehydro-3-deoxy-D-arabino-heptonate = 3-dehydroquinate + phosphate. The protein operates within metabolic intermediate biosynthesis; chorismate biosynthesis; chorismate from D-erythrose 4-phosphate and phosphoenolpyruvate: step 2/7. The sequence is that of Bifunctional 3-dehydroquinate synthase/phosphatase (aroB) from Fusobacterium nucleatum subsp. nucleatum (strain ATCC 25586 / DSM 15643 / BCRC 10681 / CIP 101130 / JCM 8532 / KCTC 2640 / LMG 13131 / VPI 4355).